The following is a 257-amino-acid chain: Nickel import system ATP-binding protein NikD (257 aa).

In terms of domain architecture, ABC transporter spans 4–245 (IDIQNLTIKN…HLHPYTERLI (242 aa)). 37 to 44 (GESGAGKS) provides a ligand contact to ATP.

It belongs to the ABC transporter superfamily. As to quaternary structure, the complex is composed of two ATP-binding proteins (NikD and NikE), two transmembrane proteins (NikB and NikC) and a solute-binding protein (NikA).

The protein resides in the cell membrane. It carries out the reaction Ni(2+)(out) + ATP + H2O = Ni(2+)(in) + ADP + phosphate + H(+). Functionally, part of the ABC transporter complex NikABCDE (Opp2) involved in nickel import. Probably responsible for energy coupling to the transport system. The sequence is that of Nickel import system ATP-binding protein NikD from Staphylococcus aureus (strain MRSA252).